A 64-amino-acid chain; its full sequence is Large ribosomal subunit protein bL35 (64 aa).

Disordered stretches follow at residues 1–22 (MPKAKTHSGASKRFRRTGTGKI) and 34–64 (EHKPTTRTRRLEGRTTVSANDTKRVNSLLNG). Residues 34 to 46 (EHKPTTRTRRLEG) are compositionally biased toward basic and acidic residues. The span at 50–64 (VSANDTKRVNSLLNG) shows a compositional bias: polar residues.

The protein belongs to the bacterial ribosomal protein bL35 family.

This Mycolicibacterium paratuberculosis (strain ATCC BAA-968 / K-10) (Mycobacterium paratuberculosis) protein is Large ribosomal subunit protein bL35.